Consider the following 275-residue polypeptide: Dermonecrotic toxin SpeSicTox-betaIIA2i (275 aa).

Histidine 5 is a catalytic residue. Glutamate 25 and aspartate 27 together coordinate Mg(2+). The active-site Nucleophile is histidine 41. 2 disulfides stabilise this stretch: cysteine 45-cysteine 51 and cysteine 47-cysteine 190. Residue aspartate 85 coordinates Mg(2+).

It belongs to the arthropod phospholipase D family. Class II subfamily. It depends on Mg(2+) as a cofactor. Expressed by the venom gland.

The protein resides in the secreted. It catalyses the reaction an N-(acyl)-sphingosylphosphocholine = an N-(acyl)-sphingosyl-1,3-cyclic phosphate + choline. It carries out the reaction an N-(acyl)-sphingosylphosphoethanolamine = an N-(acyl)-sphingosyl-1,3-cyclic phosphate + ethanolamine. The catalysed reaction is a 1-acyl-sn-glycero-3-phosphocholine = a 1-acyl-sn-glycero-2,3-cyclic phosphate + choline. The enzyme catalyses a 1-acyl-sn-glycero-3-phosphoethanolamine = a 1-acyl-sn-glycero-2,3-cyclic phosphate + ethanolamine. Functionally, dermonecrotic toxins cleave the phosphodiester linkage between the phosphate and headgroup of certain phospholipids (sphingolipid and lysolipid substrates), forming an alcohol (often choline) and a cyclic phosphate. This toxin acts on sphingomyelin (SM). It may also act on ceramide phosphoethanolamine (CPE), lysophosphatidylcholine (LPC) and lysophosphatidylethanolamine (LPE), but not on lysophosphatidylserine (LPS), and lysophosphatidylglycerol (LPG). It acts by transphosphatidylation, releasing exclusively cyclic phosphate products as second products. Induces dermonecrosis, hemolysis, increased vascular permeability, edema, inflammatory response, and platelet aggregation. This Sicarius peruensis (Six-eyed sand spider) protein is Dermonecrotic toxin SpeSicTox-betaIIA2i.